A 127-amino-acid polypeptide reads, in one-letter code: Large ribosomal subunit protein bL21 (127 aa).

This sequence belongs to the bacterial ribosomal protein bL21 family. As to quaternary structure, part of the 50S ribosomal subunit. Contacts protein L20.

Its function is as follows. This protein binds to 23S rRNA in the presence of protein L20. This chain is Large ribosomal subunit protein bL21, found in Blochmanniella floridana.